The primary structure comprises 191 residues: Transcription factor FapR (191 aa).

This sequence belongs to the FapR family.

Its function is as follows. Transcriptional factor involved in regulation of membrane lipid biosynthesis by repressing genes involved in fatty acid and phospholipid metabolism. The chain is Transcription factor FapR from Oceanobacillus iheyensis (strain DSM 14371 / CIP 107618 / JCM 11309 / KCTC 3954 / HTE831).